The primary structure comprises 219 residues: Ribose-5-phosphate isomerase A (219 aa).

Substrate is bound by residues 28–31 (SGST), 81–84 (DGAD), and 94–97 (KGGG). E103 (proton acceptor) is an active-site residue. K121 is a substrate binding site.

This sequence belongs to the ribose 5-phosphate isomerase family. In terms of assembly, homodimer.

The catalysed reaction is aldehydo-D-ribose 5-phosphate = D-ribulose 5-phosphate. Its pathway is carbohydrate degradation; pentose phosphate pathway; D-ribose 5-phosphate from D-ribulose 5-phosphate (non-oxidative stage): step 1/1. Catalyzes the reversible conversion of ribose-5-phosphate to ribulose 5-phosphate. The polypeptide is Ribose-5-phosphate isomerase A (Haemophilus influenzae (strain PittEE)).